The sequence spans 233 residues: UPF0280 protein AF_0649 (233 aa).

It belongs to the UPF0280 family.

This Archaeoglobus fulgidus (strain ATCC 49558 / DSM 4304 / JCM 9628 / NBRC 100126 / VC-16) protein is UPF0280 protein AF_0649.